Consider the following 1370-residue polypeptide: DNA polymerase II large subunit (1370 aa).

2 disordered regions span residues 279–317 (IGAD…PRAA) and 1041–1081 (AGDA…DGGS).

This sequence belongs to the archaeal DNA polymerase II family. As to quaternary structure, heterodimer of a large subunit and a small subunit. This protein undergoes a protein self splicing that involves a post-translational excision of the intervening region (intein) followed by peptide ligation.

It carries out the reaction DNA(n) + a 2'-deoxyribonucleoside 5'-triphosphate = DNA(n+1) + diphosphate. It catalyses the reaction Exonucleolytic cleavage in the 3'- to 5'-direction to yield nucleoside 5'-phosphates.. In terms of biological role, possesses two activities: a DNA synthesis (polymerase) and an exonucleolytic activity that degrades single-stranded DNA in the 3'- to 5'-direction. Has a template-primer preference which is characteristic of a replicative DNA polymerase. This chain is DNA polymerase II large subunit (polC), found in Halobacterium salinarum (strain ATCC 700922 / JCM 11081 / NRC-1) (Halobacterium halobium).